The following is a 246-amino-acid chain: Probable transcriptional regulatory protein ACP_0521 (246 aa).

Belongs to the TACO1 family.

It localises to the cytoplasm. This Acidobacterium capsulatum (strain ATCC 51196 / DSM 11244 / BCRC 80197 / JCM 7670 / NBRC 15755 / NCIMB 13165 / 161) protein is Probable transcriptional regulatory protein ACP_0521.